The sequence spans 439 residues: CBL-interacting serine/threonine-protein kinase 20 (439 aa).

In terms of domain architecture, Protein kinase spans 12-266 (YELGRLLGQG…IEKIMENSWF (255 aa)). ATP contacts are provided by residues 18–26 (LGQGTFAKV) and K41. D134 functions as the Proton acceptor in the catalytic mechanism. The interval 152–181 (DFGLSALRESKQQDGLLHTTCGTPAYVAPE) is activation loop. S156 bears the Phosphoserine mark. T170 is subject to Phosphothreonine. Residues 297–322 (VKPMSYNAFDLISSLSQGFDLSGLFE) enclose the NAF domain. A PPI region spans residues 326–356 (RSESKFTTKKDAKEIVSKFEEIATSSERFNL).

The protein belongs to the protein kinase superfamily. CAMK Ser/Thr protein kinase family. SNF1 subfamily. The cofactor is Mn(2+). Autophosphorylated. In terms of tissue distribution, confined to mature leaves.

It carries out the reaction L-seryl-[protein] + ATP = O-phospho-L-seryl-[protein] + ADP + H(+). The enzyme catalyses L-threonyl-[protein] + ATP = O-phospho-L-threonyl-[protein] + ADP + H(+). Its function is as follows. CIPK serine-threonine protein kinases interact with CBL proteins. Binding of a CBL protein to the regulatory NAF domain of CIPK protein lead to the activation of the kinase in a calcium-dependent manner. Required for the abscisic acid-mediated (ABA) signaling pathway involved in seed germination and growth elongation inhibition. The sequence is that of CBL-interacting serine/threonine-protein kinase 20 (CIPK20) from Arabidopsis thaliana (Mouse-ear cress).